Consider the following 206-residue polypeptide: uncharacterized protein (206 aa).

This is an uncharacterized protein from Mycoplasma pneumoniae (strain ATCC 29342 / M129 / Subtype 1) (Mycoplasmoides pneumoniae).